The chain runs to 35 residues: Photosystem II reaction center protein T (35 aa).

A helical transmembrane segment spans residues 3–23 (ALVYTFLLVSTLGIIFFAIFF).

Belongs to the PsbT family. As to quaternary structure, PSII is composed of 1 copy each of membrane proteins PsbA, PsbB, PsbC, PsbD, PsbE, PsbF, PsbH, PsbI, PsbJ, PsbK, PsbL, PsbM, PsbT, PsbY, PsbZ, Psb30/Ycf12, at least 3 peripheral proteins of the oxygen-evolving complex and a large number of cofactors. It forms dimeric complexes.

Its subcellular location is the plastid. The protein localises to the chloroplast thylakoid membrane. Its function is as follows. Found at the monomer-monomer interface of the photosystem II (PS II) dimer, plays a role in assembly and dimerization of PSII. PSII is a light-driven water plastoquinone oxidoreductase, using light energy to abstract electrons from H(2)O, generating a proton gradient subsequently used for ATP formation. This Bassia hyssopifolia (Fivehorn smotherweed) protein is Photosystem II reaction center protein T.